Reading from the N-terminus, the 220-residue chain is Pyridoxine/pyridoxamine 5'-phosphate oxidase (220 aa).

Residues 69–74, 84–85, arginine 90, lysine 91, and glutamine 113 each bind FMN; these read RVVLLK and YT. Lysine 74 lines the substrate pocket. Tyrosine 131, arginine 135, and serine 139 together coordinate substrate. FMN is bound by residues 148 to 149 and tryptophan 193; that span reads QS. 199–201 contributes to the substrate binding site; it reads RLH. Arginine 203 provides a ligand contact to FMN.

It belongs to the pyridoxamine 5'-phosphate oxidase family. As to quaternary structure, homodimer. The cofactor is FMN.

The catalysed reaction is pyridoxamine 5'-phosphate + O2 + H2O = pyridoxal 5'-phosphate + H2O2 + NH4(+). It carries out the reaction pyridoxine 5'-phosphate + O2 = pyridoxal 5'-phosphate + H2O2. The protein operates within cofactor metabolism; pyridoxal 5'-phosphate salvage; pyridoxal 5'-phosphate from pyridoxamine 5'-phosphate: step 1/1. Its pathway is cofactor metabolism; pyridoxal 5'-phosphate salvage; pyridoxal 5'-phosphate from pyridoxine 5'-phosphate: step 1/1. In terms of biological role, catalyzes the oxidation of either pyridoxine 5'-phosphate (PNP) or pyridoxamine 5'-phosphate (PMP) into pyridoxal 5'-phosphate (PLP). The sequence is that of Pyridoxine/pyridoxamine 5'-phosphate oxidase from Myxococcus xanthus.